Reading from the N-terminus, the 508-residue chain is Flagellin (508 aa).

Belongs to the bacterial flagellin family.

It is found in the secreted. It localises to the bacterial flagellum. Its function is as follows. Flagellin is the subunit protein which polymerizes to form the filaments of bacterial flagella. In Salmonella oranienberg, this protein is Flagellin (fliC).